The following is a 285-amino-acid chain: MTSPIIVRTVAEMREHVRAWKAAGQRVAVVPTMGALHEGHLSLVRLAQQHAERVIATVFVNPKQFAPHEDFDAYPRGEAADAEKLALVGCDLLFAPNATEMYAPGFSTLVSVSGVSEPLEGAARPQFFGGVATVVAKLFIQSQADVAVFGEKDYQQLQVVRRMARDLDIPVEIIGAPTARAEDGLALSSRNAYLSAEERAAAVALPTAMKAAAAAVAQGGPIEDAERSAVAALQAAGFGQVDYVEIREASDLSRLGPGPIGEASGRILVAAWLGKTRLIDNMAVG.

ATP is bound at residue 33–40 (MGALHEGH). Histidine 40 (proton donor) is an active-site residue. Position 64 (glutamine 64) interacts with (R)-pantoate. Beta-alanine is bound at residue glutamine 64. 150–153 (GEKD) serves as a coordination point for ATP. Glutamine 156 serves as a coordination point for (R)-pantoate. ATP contacts are provided by residues alanine 179 and 187–190 (LSSR).

Belongs to the pantothenate synthetase family. In terms of assembly, homodimer.

It is found in the cytoplasm. It catalyses the reaction (R)-pantoate + beta-alanine + ATP = (R)-pantothenate + AMP + diphosphate + H(+). It functions in the pathway cofactor biosynthesis; (R)-pantothenate biosynthesis; (R)-pantothenate from (R)-pantoate and beta-alanine: step 1/1. Its function is as follows. Catalyzes the condensation of pantoate with beta-alanine in an ATP-dependent reaction via a pantoyl-adenylate intermediate. The polypeptide is Pantothenate synthetase (Caulobacter vibrioides (strain ATCC 19089 / CIP 103742 / CB 15) (Caulobacter crescentus)).